The following is a 300-amino-acid chain: Ribosomal protein L11 methyltransferase (300 aa).

Residues Thr-152, Gly-173, Asp-195, and Asn-234 each contribute to the S-adenosyl-L-methionine site.

This sequence belongs to the methyltransferase superfamily. PrmA family.

The protein resides in the cytoplasm. The catalysed reaction is L-lysyl-[protein] + 3 S-adenosyl-L-methionine = N(6),N(6),N(6)-trimethyl-L-lysyl-[protein] + 3 S-adenosyl-L-homocysteine + 3 H(+). Methylates ribosomal protein L11. The chain is Ribosomal protein L11 methyltransferase from Burkholderia lata (strain ATCC 17760 / DSM 23089 / LMG 22485 / NCIMB 9086 / R18194 / 383).